An 87-amino-acid polypeptide reads, in one-letter code: Small ribosomal subunit protein bS16 (87 aa).

Belongs to the bacterial ribosomal protein bS16 family.

This chain is Small ribosomal subunit protein bS16, found in Desulfatibacillum aliphaticivorans.